A 391-amino-acid polypeptide reads, in one-letter code: Sulfate adenylyltransferase (391 aa).

Belongs to the sulfate adenylyltransferase family.

The enzyme catalyses sulfate + ATP + H(+) = adenosine 5'-phosphosulfate + diphosphate. The protein operates within sulfur metabolism; hydrogen sulfide biosynthesis; sulfite from sulfate: step 1/3. The protein is Sulfate adenylyltransferase of Lactiplantibacillus plantarum (strain ATCC BAA-793 / NCIMB 8826 / WCFS1) (Lactobacillus plantarum).